Reading from the N-terminus, the 428-residue chain is MVLLHPLLTAAALLGASARAQSVVGTPFGFASGTTGGGNAAPAAPKDTNELKEWLADPNPRVIVIDKEFNFIGTEDTCTDCECCIPDSNTCGDAGQNAIKTEGSDWCGSYPATTCTYDNAGLEGMEVASDKTIIGVGDAGVIRGKGLRLVNGVSNIIIQNVHITELNPQYIWGGDAISLDGTDKIWVDHVKVSLVGRQMFVTGYESSGGVTVSNSEFDGQTKWSASCDGHHYWSVLGYGKGDQITFANNYIHHTSGRSPKIEFDSHWHAYNNFWENNSGHAFDVGEGANVLIEGNVFSNVKTPMNPEDTPGSTFAVNAQDASSCTSALGRPCIANELTSSGELSGNDEAVLSGWPKGEGDTKAMTTDKVPSYVKANAGVGKLGSGGSGAASSSVSITPSPTSSAIPSSSATPSSSAYARRHYARHHHY.

Positions 1 to 20 (MVLLHPLLTAAALLGASARA) are cleaved as a signal peptide. An intrachain disulfide couples cysteine 83 to cysteine 107. Residue arginine 257 is part of the active site. N-linked (GlcNAc...) asparagine glycosylation is present at asparagine 276. Residues cysteine 324 and cysteine 332 are joined by a disulfide bond. The disordered stretch occupies residues 383–428 (GSGGSGAASSSVSITPSPTSSAIPSSSATPSSSAYARRHYARHHHY). Residues 389–417 (AASSSVSITPSPTSSAIPSSSATPSSSAY) show a composition bias toward low complexity. Residues 418 to 428 (ARRHYARHHHY) show a composition bias toward basic residues.

Belongs to the polysaccharide lyase 1 family.

The protein localises to the secreted. The enzyme catalyses Eliminative cleavage of (1-&gt;4)-alpha-D-galacturonan methyl ester to give oligosaccharides with 4-deoxy-6-O-methyl-alpha-D-galact-4-enuronosyl groups at their non-reducing ends.. In terms of biological role, pectinolytic enzymes consist of four classes of enzymes: pectin lyase, polygalacturonase, pectin methylesterase and rhamnogalacturonase. Among pectinolytic enzymes, pectin lyase is the most important in depolymerization of pectin, since it cleaves internal glycosidic bonds of highly methylated pectins. The protein is Probable pectin lyase F (pelF) of Aspergillus oryzae (strain ATCC 42149 / RIB 40) (Yellow koji mold).